The primary structure comprises 651 residues: tRNA uridine 5-carboxymethylaminomethyl modification enzyme MnmG (651 aa).

Residue 11 to 16 participates in FAD binding; that stretch reads GAGHAG. NAD(+) is bound at residue 296 to 310; sequence GPRYCPSIEDKIVRF.

This sequence belongs to the MnmG family. As to quaternary structure, homodimer. Heterotetramer of two MnmE and two MnmG subunits. FAD serves as cofactor.

The protein localises to the cytoplasm. Its function is as follows. NAD-binding protein involved in the addition of a carboxymethylaminomethyl (cmnm) group at the wobble position (U34) of certain tRNAs, forming tRNA-cmnm(5)s(2)U34. The polypeptide is tRNA uridine 5-carboxymethylaminomethyl modification enzyme MnmG (Chloroflexus aurantiacus (strain ATCC 29366 / DSM 635 / J-10-fl)).